The following is a 531-amino-acid chain: Achacin (531 aa).

The signal sequence occupies residues 1–22 (MLLLNSALFILCLVCWLPGTSS). The propeptide occupies 23-29 (SRVLTRR). N-linked (GlcNAc...) asparagine glycans are attached at residues N112, N150, N308, and N392.

It to A.kurodai aplysianin-A. As to quaternary structure, homodimer. As to expression, collar tissue.

In terms of biological role, antibacterial glycoprotein. The sequence is that of Achacin from Lissachatina fulica (Giant African land snail).